The chain runs to 309 residues: Taste receptor type 2 member 46 (309 aa).

M1 is a topological domain (extracellular). The chain crosses the membrane as a helical span at residues 2-22 (ITFLPITFSILIVVIFFIGNF). Over 23 to 46 (ANGFIALINSIEWVKRQKISFAGQ) the chain is Cytoplasmic. Residues 47 to 67 (ILTALAVSRVGLLWVLSLHWY) form a helical membrane-spanning segment. The Extracellular segment spans residues 68-86 (ATEFNLAFHSVEVRSTAYN). A helical transmembrane segment spans residues 87-107 (VWVVTNHFSNWLSTSLSMFYL). At 108 to 126 (LRIATFSNLIFLHLNRRVK) the chain is on the cytoplasmic side. Residues 127–147 (SVILVTLLGPLLFLVCQLFVM) form a helical membrane-spanning segment. Residues 148 to 178 (NMNQIVRTKEYEGNMTWKIKLKSAMYLSNTT) are Extracellular-facing. N-linked (GlcNAc...) asparagine glycosylation is found at N161 and N176. A helical membrane pass occupies residues 179-199 (VAMLANFVPLTLTLISFLLLI). At 200-229 (CSLCKHLKKMRVHGKGSQDPSTKVHTKALQ) the chain is on the cytoplasmic side. A helical membrane pass occupies residues 230–250 (IVTSFLLVCAIYFLSIILSVW). At 251–259 (NSGGLENKP) the chain is on the extracellular side. The chain crosses the membrane as a helical span at residues 260 to 280 (FFMFCQAIKFSYPSTHPFILI). Over 281–309 (WGNKTLKQTFLSVLRNVRYWVKGQKPSSP) the chain is Cytoplasmic.

It belongs to the G-protein coupled receptor T2R family.

The protein resides in the membrane. It localises to the cell projection. It is found in the cilium membrane. Functionally, receptor that may play a role in the perception of bitterness and is gustducin-linked. May play a role in sensing the chemical composition of the gastrointestinal content. The activity of this receptor may stimulate alpha gustducin, mediate PLC-beta-2 activation and lead to the gating of TRPM5. In airway epithelial cells, binding of bitter compounds increases the intracellular calcium ion concentration and stimulates ciliary beat frequency. The polypeptide is Taste receptor type 2 member 46 (TAS2R46) (Papio hamadryas (Hamadryas baboon)).